Here is a 279-residue protein sequence, read N- to C-terminus: Movement protein (279 aa).

The segment at 246–279 is disordered; the sequence is SESEELNVESPPAAIGSSSASRSEAFRPQVVNGL. A compositionally biased stretch (low complexity) spans 254 to 268; the sequence is ESPPAAIGSSSASRS.

The protein belongs to the cucumovirus movement protein family.

It is found in the host cell junction. The protein localises to the host plasmodesma. Functionally, transports viral genome to neighboring plant cells directly through plasmosdesmata, without any budding. The movement protein allows efficient cell to cell propagation, by bypassing the host cell wall barrier. Acts by forming a tubular structure at the host plasmodesmata, enlarging it enough to allow free passage of virion capsids. The chain is Movement protein from Cucumber mosaic virus (strain CS) (CMV).